The following is a 108-amino-acid chain: Replication initiation control protein YabA (108 aa).

Zn(2+)-binding residues include His83, Cys85, Cys99, and Cys102.

It belongs to the YabA family. Homotetramer. Interacts with both DnaA and DnaN, acting as a bridge between these two proteins. The cofactor is Zn(2+).

The protein localises to the cytoplasm. Its subcellular location is the nucleoid. In terms of biological role, involved in control of chromosome replication initiation. Inhibits the cooperative binding of DnaA to the oriC region, thus negatively regulating initiation of chromosome replication. Inhibits the ability of DnaA-ATP to form a helix on DNA; does not disassemble preformed DnaA-DNA helices. Decreases the residence time of DnaA on the chromosome at its binding sites (oriC, replication forks and promoter-binding sites). Tethers DnaA to the replication machinery via the DNA polymerase beta sliding clamp subunit (dnaN). Associates with oriC and other DnaA targets on the chromosome in a DnaA-dependent manner. In Lactococcus lactis subsp. cremoris (strain SK11), this protein is Replication initiation control protein YabA.